The following is a 473-amino-acid chain: Zinc finger and SCAN domain-containing protein 21 (473 aa).

Residue K27 forms a Glycyl lysine isopeptide (Lys-Gly) (interchain with G-Cter in SUMO2) linkage. Residues 45–127 enclose the SCAN box domain; that stretch reads RQRFRQFGYH…TLLEDLEREL (83 aa). The tract at residues 127–169 is disordered; that stretch reads LDEPGHQVSTPPNEQKPVWEKISSSGTAKESPSSMQPQPLETS. Residues 148–167 are compositionally biased toward polar residues; the sequence is ISSSGTAKESPSSMQPQPLE. Residues K221 and K232 each participate in a glycyl lysine isopeptide (Lys-Gly) (interchain with G-Cter in SUMO2) cross-link. A disordered region spans residues 244 to 272; it reads LENEKGTKPPLQEAGSKKGRESVPTKPTP. Over residues 258-272 the composition is skewed to basic and acidic residues; it reads GSKKGRESVPTKPTP. 7 consecutive C2H2-type zinc fingers follow at residues 277 to 299, 305 to 327, 333 to 354, 360 to 382, 388 to 410, 416 to 438, and 444 to 466; these read YICA…RRTH, YVCT…YRTH, YDCK…QRMH, YQCK…YRIH, YQCN…QRLH, YKCK…HRIH, and YWCH…QRVH. A Glycyl lysine isopeptide (Lys-Gly) (interchain with G-Cter in SUMO2) cross-link involves residue K349.

Belongs to the krueppel C2H2-type zinc-finger protein family.

It is found in the nucleus. Its function is as follows. Strong transcriptional activator. Plays an important role in spermatogenesis; essential for the progression of meiotic prophase I in spermatocytes. In Homo sapiens (Human), this protein is Zinc finger and SCAN domain-containing protein 21 (ZSCAN21).